The chain runs to 209 residues: Uracil phosphoribosyltransferase (209 aa).

5-phospho-alpha-D-ribose 1-diphosphate is bound by residues arginine 79, arginine 104, and 131 to 139 (DPMLATGGS). Uracil contacts are provided by residues isoleucine 194 and 199-201 (GDA). Aspartate 200 serves as a coordination point for 5-phospho-alpha-D-ribose 1-diphosphate.

Belongs to the UPRTase family. It depends on Mg(2+) as a cofactor.

The catalysed reaction is UMP + diphosphate = 5-phospho-alpha-D-ribose 1-diphosphate + uracil. The protein operates within pyrimidine metabolism; UMP biosynthesis via salvage pathway; UMP from uracil: step 1/1. Its activity is regulated as follows. Allosterically activated by GTP. Catalyzes the conversion of uracil and 5-phospho-alpha-D-ribose 1-diphosphate (PRPP) to UMP and diphosphate. The sequence is that of Uracil phosphoribosyltransferase from Geobacter sp. (strain M21).